Reading from the N-terminus, the 468-residue chain is ERO1-like protein alpha (468 aa).

Residues 1-23 (MGRRWGFLIGFLVAVGLLGLGHG) form the signal peptide. 8 cysteine pairs are disulfide-bonded: C35/C48, C37/C46, C85/C391, C94/C99, C94/C131, C99/C104, C208/C241, and C394/C397. Residues S106, S143, and S145 each carry the phosphoserine modification. FAD is bound by residues R187, T189, and W200. S252 and H255 together coordinate FAD. N280 carries an N-linked (GlcNAc...) asparagine glycan. FAD is bound by residues R287 and R300. An N-linked (GlcNAc...) asparagine glycan is attached at N384.

Belongs to the EROs family. Predominantly monomer. May function both as a monomer and a homodimer. Interacts with PDILT. Interacts with ERP44; the interaction results in retention of ERO1A in the endoplasmic reticulum. FAD is required as a cofactor. The Cys-94/Cys-99 and Cys-394/Cys-397 disulfide bonds constitute the redox-active center. The Cys-94/Cys-99 disulfide bond may accept electron from P4HB and funnel them to the active site disulfide Cys-394/Cys-397. The regulatory Cys-99/Cys-104 disulfide bond stabilizes the other regulatory bond Cys-94/Cys-131. Post-translationally, phosphorylated on Ser-145 by FAM20C in the Golgi which increases its enzymatic activity. Phosphorylation is induced by lactation. It is also induced by hypoxia and reductive stress.

Its subcellular location is the endoplasmic reticulum membrane. It is found in the golgi apparatus lumen. The protein resides in the secreted. The protein localises to the cell projection. It localises to the dendrite. With respect to regulation, enzyme activity is tightly regulated to prevent the accumulation of reactive oxygen species in the endoplasmic reticulum. Reversibly down-regulated by the formation of disulfide bonds between the active site Cys-94 and Cys-131, and between Cys-99 and Cys-104. Glutathione may be required to regulate its activity in the endoplasmic reticulum. Oxidoreductase involved in disulfide bond formation in the endoplasmic reticulum. Efficiently reoxidizes P4HB/PDI, the enzyme catalyzing protein disulfide formation, in order to allow P4HB to sustain additional rounds of disulfide formation. Following P4HB reoxidation, passes its electrons to molecular oxygen via FAD, leading to the production of reactive oxygen species (ROS) in the cell. Required for the proper folding of immunoglobulins. Plays an important role in ER stress-induced, CHOP-dependent apoptosis by activating the inositol 1,4,5-trisphosphate receptor IP3R1. This chain is ERO1-like protein alpha, found in Bos taurus (Bovine).